A 75-amino-acid chain; its full sequence is Probable pilin MJ0431 (75 aa).

Residues 1-15 constitute a propeptide that is removed on maturation; sequence MGKMKILKKLLSKKG. A QXSXEXXXL motif is present at residues 16–24; it reads QLSMEVGVL.

The N-terminus is cleaved by the prepilin peptidase EppA, which recognizes the class III signal sequence.

The protein localises to the secreted. Its subcellular location is the cell surface. The protein resides in the fimbrium. The protein is Probable pilin MJ0431 of Methanocaldococcus jannaschii (strain ATCC 43067 / DSM 2661 / JAL-1 / JCM 10045 / NBRC 100440) (Methanococcus jannaschii).